The primary structure comprises 521 residues: GMP synthase [glutamine-hydrolyzing] (521 aa).

The Glutamine amidotransferase type-1 domain occupies 8 to 203 (KILILDFGAQ…VVDVCGCQTL (196 aa)). Cysteine 85 (nucleophile) is an active-site residue. Active-site residues include histidine 177 and glutamate 179. In terms of domain architecture, GMPS ATP-PPase spans 204 to 396 (WTAANIIEDQ…LGLPRTMVYR (193 aa)). Residue 231 to 237 (SGGVDSS) participates in ATP binding.

As to quaternary structure, homodimer.

It carries out the reaction XMP + L-glutamine + ATP + H2O = GMP + L-glutamate + AMP + diphosphate + 2 H(+). It functions in the pathway purine metabolism; GMP biosynthesis; GMP from XMP (L-Gln route): step 1/1. Functionally, catalyzes the synthesis of GMP from XMP. This chain is GMP synthase [glutamine-hydrolyzing], found in Xanthomonas axonopodis pv. citri (strain 306).